The sequence spans 147 residues: MKIVIQRVKEASVSIDGKIAGAIDQGLLLLVGIGPDDQAEDIDYAVRKISHMRIFSDPEGKMNRSIQDIEGSVLSISQFTLYADTKKGNRPAFTGAAKPDRASQLYNSFNAQLEQLVPVQRGVFGADMQVSLINDGPVTIILDTKYR.

Residues 136–137 (GP) carry the Gly-cisPro motif, important for rejection of L-amino acids motif.

This sequence belongs to the DTD family. Homodimer.

Its subcellular location is the cytoplasm. The enzyme catalyses glycyl-tRNA(Ala) + H2O = tRNA(Ala) + glycine + H(+). It catalyses the reaction a D-aminoacyl-tRNA + H2O = a tRNA + a D-alpha-amino acid + H(+). An aminoacyl-tRNA editing enzyme that deacylates mischarged D-aminoacyl-tRNAs. Also deacylates mischarged glycyl-tRNA(Ala), protecting cells against glycine mischarging by AlaRS. Acts via tRNA-based rather than protein-based catalysis; rejects L-amino acids rather than detecting D-amino acids in the active site. By recycling D-aminoacyl-tRNA to D-amino acids and free tRNA molecules, this enzyme counteracts the toxicity associated with the formation of D-aminoacyl-tRNA entities in vivo and helps enforce protein L-homochirality. This Streptococcus equi subsp. equi (strain 4047) protein is D-aminoacyl-tRNA deacylase.